Here is a 344-residue protein sequence, read N- to C-terminus: Fructose-1,6-bisphosphatase class 1 (344 aa).

4 residues coordinate Mg(2+): Glu91, Asp110, Leu112, and Asp113. Residues 113-116 (DGSS) and Asn200 each bind substrate. Glu272 is a binding site for Mg(2+).

The protein belongs to the FBPase class 1 family. As to quaternary structure, homotetramer. The cofactor is Mg(2+).

It is found in the cytoplasm. The enzyme catalyses beta-D-fructose 1,6-bisphosphate + H2O = beta-D-fructose 6-phosphate + phosphate. It functions in the pathway carbohydrate biosynthesis; Calvin cycle. The sequence is that of Fructose-1,6-bisphosphatase class 1 from Rhodopseudomonas palustris (strain BisB18).